Reading from the N-terminus, the 210-residue chain is RNA chaperone ProQ (210 aa).

Positions 98-127 are enriched in basic and acidic residues; the sequence is HAKASLEESKAKVAARRKEQAKKAREEAKA. The disordered stretch occupies residues 98–155; the sequence is HAKASLEESKAKVAARRKEQAKKAREEAKAKKPARATTPPKRRPQPAAVAKKQEKPVE.

Belongs to the ProQ family.

Its subcellular location is the cytoplasm. In terms of biological role, RNA chaperone with significant RNA binding, RNA strand exchange and RNA duplexing activities. The polypeptide is RNA chaperone ProQ (Aliivibrio salmonicida (strain LFI1238) (Vibrio salmonicida (strain LFI1238))).